The sequence spans 1032 residues: Reticulon-3 (1032 aa).

Over residues 1–24 (MAEPSAATQSHSISSSSFGAEPSA) the composition is skewed to low complexity. A disordered region spans residues 1-61 (MAEPSAATQS…SSSSSQPVSL (61 aa)). Alanine 2 is modified (N-acetylalanine). At 2 to 863 (AEPSAATQSH…KKTGFVFGTT (862 aa)) the chain is on the cytoplasmic side. The residue at position 30 (serine 30) is a Phosphoserine. A compositionally biased stretch (low complexity) spans 32 to 61 (GACPALGTKSCSSSCADSFVSSSSSQPVSL). A phosphoserine mark is found at serine 229, serine 243, serine 246, serine 283, serine 316, and serine 453. The segment covering 545–568 (CEREEKTSKNFEELVSDSELHQDQ) has biased composition (basic and acidic residues). Positions 545–617 (CEREEKTSKN…NPKLPSTVSP (73 aa)) are disordered. Over residues 605–617 (TTENPKLPSTVSP) the composition is skewed to polar residues. A phosphoserine mark is found at serine 649 and serine 650. Positions 696–715 (NESGGSEIKDIGSKYSEQSK) are enriched in basic and acidic residues. The interval 696 to 726 (NESGGSEIKDIGSKYSEQSKETNGSEPLGVF) is disordered. Serine 735 is subject to Phosphoserine. One can recognise a Reticulon domain in the interval 844–1032 (VHDLIFWRDV…LPGIAKKKAE (189 aa)). The segment at residues 864 to 887 (LIMLLSLAAFSVISVVSYLILALL) is an intramembrane region (helical). Residues 888–947 (SVTISFRIYKSVIQAVQKSEEGHPFKAYLDVDITLSSEAFHNYMNAAMVHINRALKLIIR) are Cytoplasmic-facing. An intramembrane region (helical) is located at residues 948–968 (LFLVEDLVDSLKLAVFMWLMT). The Cytoplasmic portion of the chain corresponds to 969–972 (YVGA). Positions 973 to 993 (VFNGITLLILAELLIFSVPIV) form an intramembrane region, helical. The interval 987-1032 (IFSVPIVYEKYKTQIDHYVGIARDQTKSIVEKIQAKLPGIAKKKAE) is interaction with FADD. The Cytoplasmic portion of the chain corresponds to 994 to 1032 (YEKYKTQIDHYVGIARDQTKSIVEKIQAKLPGIAKKKAE). Residues 1000 to 1002 (QID) are interaction with BACE1.

In terms of assembly, homodimer. Interacts with ATL1. Interacts with RTN4. Isoform 3 interacts with BACE1, BACE2, BCL2 and FADD. Interacts with ATL2. Interacts with TMEM33. Interacts with ZFYVE27 and with KIF5A in a ZFYVE27-dependent manner. Interacts with RIGI. Interacts with TRIM25. As to quaternary structure, (Microbial infection) Interacts with Coxsackievirus A16, enterovirus 71 and poliovirus P2C proteins. (Microbial infection) Interacts with West Nile virus protein NS4A. Isoform 3 is widely expressed, with highest levels in brain, where it is enriched in neuronal cell bodies from gray matter (at protein level). Three times more abundant in macula than in peripheral retina. Isoform 1 is expressed at high levels in brain and at low levels in skeletal muscle. Isoform 2 is only found in melanoma.

It is found in the endoplasmic reticulum membrane. It localises to the golgi apparatus membrane. Its function is as follows. May be involved in membrane trafficking in the early secretory pathway. Inhibits BACE1 activity and amyloid precursor protein processing. May induce caspase-8 cascade and apoptosis. May favor BCL2 translocation to the mitochondria upon endoplasmic reticulum stress. Induces the formation of endoplasmic reticulum tubules. Also acts as an inflammation-resolving regulator by interacting with both TRIM25 and RIGI, subsequently impairing RIGI 'Lys-63'-linked polyubiquitination leading to IRF3 and NF-kappa-B inhibition. Functionally, (Microbial infection) Plays a positive role in viral replication and pathogenesis of enteroviruses. In Homo sapiens (Human), this protein is Reticulon-3 (RTN3).